The sequence spans 449 residues: GTPase Der (449 aa).

2 EngA-type G domains span residues 3 to 167 (SIVA…PDEP) and 175 to 350 (TNIA…EQYS). GTP contacts are provided by residues 9–16 (GRPNVGKS), 56–60 (DTGGF), 119–122 (NKVD), 181–188 (GRPNVGKS), 228–232 (DTAGI), and 293–296 (NKWD). In terms of domain architecture, KH-like spans 351–435 (RRVTTSELNR…PFRLLFRGRE (85 aa)).

This sequence belongs to the TRAFAC class TrmE-Era-EngA-EngB-Septin-like GTPase superfamily. EngA (Der) GTPase family. Associates with the 50S ribosomal subunit.

Its function is as follows. GTPase that plays an essential role in the late steps of ribosome biogenesis. The sequence is that of GTPase Der from Trichlorobacter lovleyi (strain ATCC BAA-1151 / DSM 17278 / SZ) (Geobacter lovleyi).